The sequence spans 86 residues: Cell division topological specificity factor (86 aa).

The protein belongs to the MinE family.

Functionally, prevents the cell division inhibition by proteins MinC and MinD at internal division sites while permitting inhibition at polar sites. This ensures cell division at the proper site by restricting the formation of a division septum at the midpoint of the long axis of the cell. The protein is Cell division topological specificity factor of Aliivibrio salmonicida (strain LFI1238) (Vibrio salmonicida (strain LFI1238)).